Here is a 618-residue protein sequence, read N- to C-terminus: Chaperone protein DnaK (618 aa).

Threonine 175 carries the phosphothreonine; by autocatalysis modification. The tract at residues 576-618 (SQNAEPGADGGANSGANPGGTTGNTDTKDDNVVDAEYKVDDDK) is disordered. Residues 583–597 (ADGGANSGANPGGTT) show a composition bias toward gly residues. Basic and acidic residues predominate over residues 601 to 618 (DTKDDNVVDAEYKVDDDK).

This sequence belongs to the heat shock protein 70 family.

In terms of biological role, acts as a chaperone. This is Chaperone protein DnaK from Clostridium kluyveri (strain NBRC 12016).